We begin with the raw amino-acid sequence, 454 residues long: Mannosylfructose-phosphate synthase (454 aa).

This sequence belongs to the glycosyltransferase 1 family. Requires Mg(2+) as cofactor. It depends on Mn(2+) as a cofactor.

It catalyses the reaction beta-D-fructose 6-phosphate + GDP-alpha-D-mannose = beta-D-fructofuranosyl alpha-D-mannopyranoside 6(F)-phosphate + GDP + H(+). It participates in carbohydrate metabolism; mannosylfructose biosynthesis; beta-D-fructofuranosyl alpha-D-mannopyranoside from D-fructose 6-phosphate and GDP-alpha-D-mannose: step 1/2. The polypeptide is Mannosylfructose-phosphate synthase (Agrobacterium fabrum (strain C58 / ATCC 33970) (Agrobacterium tumefaciens (strain C58))).